Consider the following 396-residue polypeptide: Putative nickel insertion protein (396 aa).

The protein belongs to the LarC family.

The polypeptide is Putative nickel insertion protein (Methanosarcina barkeri (strain Fusaro / DSM 804)).